We begin with the raw amino-acid sequence, 445 residues long: GTPase Der (445 aa).

EngA-type G domains are found at residues proline 3–glutamine 167 and isoleucine 180–methionine 353. Residues glycine 9–serine 16, aspartate 56–phenylalanine 60, asparagine 119–glutamate 122, glycine 186–serine 193, aspartate 233–leucine 237, and asparagine 298–aspartate 301 contribute to the GTP site. The KH-like domain maps to alanine 354–asparagine 438.

This sequence belongs to the TRAFAC class TrmE-Era-EngA-EngB-Septin-like GTPase superfamily. EngA (Der) GTPase family. Associates with the 50S ribosomal subunit.

GTPase that plays an essential role in the late steps of ribosome biogenesis. The protein is GTPase Der of Burkholderia lata (strain ATCC 17760 / DSM 23089 / LMG 22485 / NCIMB 9086 / R18194 / 383).